Consider the following 321-residue polypeptide: MSAGGEHLKDEGTRRQVVLAGGIAGLVSRFCVAPLDVVKIRLQLQIHSLSDPISHRDVTGPIYKGTLSTMRDIIRQEGITGLWKGNIPAELMYVCYGVIQFSAYRTTTQALAQLDTYRLPPSAESFVAGATAGGLATASTYPLDLLRTRFAAQGTDRVYTSLMSSVRDIARNEGYAGFFRGCSAAVGQIVPYMGLFFATYEALRPPLAQYQDLPFGSGDAAAGVIASVSSKTVMFPLDLIRKRLQVQGPTRQLYIHRNIPEYQGVFNTMKLILRTQGIRGLYRGLTVSLFKAAPASAVTMWTYETSLRLLQDMEVATSKED.

6 helical membrane-spanning segments follow: residues 12–28 (GTRRQVVLAGGIAGLVS), 91–107 (LMYVCYGVIQFSAYRTT), 126–146 (FVAGATAGGLATASTYPLDLL), 184–200 (AAVGQIVPYMGLFFATY), 221–237 (AAGVIASVSSKTVMFPL), and 284–301 (GLTVSLFKAAPASAVTMW). 3 Solcar repeats span residues 12–110 (GTRR…TTQA), 120–206 (PPSA…LRPP), and 214–309 (PFGS…SLRL).

This sequence belongs to the mitochondrial carrier (TC 2.A.29) family.

The protein resides in the mitochondrion inner membrane. Its function is as follows. Mitochondrial transporter that mediates uptake of thiamine pyrophosphate (ThPP) into mitochondria. The sequence is that of Mitochondrial thiamine pyrophosphate carrier 1 (tpc1) from Aspergillus niger (strain ATCC MYA-4892 / CBS 513.88 / FGSC A1513).